The sequence spans 269 residues: Shikimate dehydrogenase (NADP(+)) (269 aa).

Shikimate is bound by residues 17 to 19 (SKS) and T64. K68 serves as the catalytic Proton acceptor. An NADP(+)-binding site is contributed by E80. Residues N89 and D105 each coordinate shikimate. NADP(+)-binding positions include 130 to 134 (GAGGA), 154 to 159 (NRTRAK), and M213. Y215 contributes to the shikimate binding site. G237 is a binding site for NADP(+).

It belongs to the shikimate dehydrogenase family. Homodimer.

It catalyses the reaction shikimate + NADP(+) = 3-dehydroshikimate + NADPH + H(+). Its pathway is metabolic intermediate biosynthesis; chorismate biosynthesis; chorismate from D-erythrose 4-phosphate and phosphoenolpyruvate: step 4/7. In terms of biological role, involved in the biosynthesis of the chorismate, which leads to the biosynthesis of aromatic amino acids. Catalyzes the reversible NADPH linked reduction of 3-dehydroshikimate (DHSA) to yield shikimate (SA). This is Shikimate dehydrogenase (NADP(+)) from Neisseria lactamica.